We begin with the raw amino-acid sequence, 206 residues long: Ribosomal RNA small subunit methyltransferase G (206 aa).

S-adenosyl-L-methionine-binding positions include glycine 74, leucine 79, 125–126 (VE), and arginine 140.

Belongs to the methyltransferase superfamily. RNA methyltransferase RsmG family.

Its subcellular location is the cytoplasm. It catalyses the reaction guanosine(527) in 16S rRNA + S-adenosyl-L-methionine = N(7)-methylguanosine(527) in 16S rRNA + S-adenosyl-L-homocysteine. In terms of biological role, specifically methylates the N7 position of guanine in position 527 of 16S rRNA. This is Ribosomal RNA small subunit methyltransferase G from Shewanella sp. (strain MR-4).